A 204-amino-acid polypeptide reads, in one-letter code: High frequency lysogenization protein HflD homolog (204 aa).

Belongs to the HflD family.

The protein resides in the cytoplasm. Its subcellular location is the cell inner membrane. The protein is High frequency lysogenization protein HflD homolog of Shewanella amazonensis (strain ATCC BAA-1098 / SB2B).